Here is a 941-residue protein sequence, read N- to C-terminus: Ankyrin repeat and MYND domain-containing protein 1 (941 aa).

MORN repeat units follow at residues 2–24 (YQGEFGLNMKLGYGKFSWPTGES), 25–47 (YHGQFYRDHCHGLGTYMWPDGSS), and 70–92 (FQGLYKADQRFGPGVETYPDGSQ). 7 ANK repeats span residues 292–321 (KGYTVLAAAATHCHNDIVNLLLDCGADVNK), 513–542 (MRRMALSMIERRKRWRTIKLLLRRGADPNL), 545–574 (VPMQVLFLAVKAGDVDGVRLLLEHGARTDI), 581–613 (STLTPLHIAAALPGEEGVQIVELLLHAITDVDA), 657–691 (GGRTALHMACEREDDNKCARDIVRLLLSHGANPNL), 694–723 (SGHSPLSLSIASGNELVVKELLTQGADPNL), and 737–766 (CDLTYEHQRNMDSKLALIDRLISHGADILK). Residues Cys-880, Cys-883, Cys-894, Cys-897, Cys-903, Cys-907, His-916, and Cys-920 each coordinate Zn(2+). The MYND-type zinc finger occupies 880 to 920 (CYQCGRSIGVRLLPCPRCYGILTCSKYCKTKAWTEFHKKDC).

The sequence is that of Ankyrin repeat and MYND domain-containing protein 1 (ANKMY1) from Homo sapiens (Human).